Reading from the N-terminus, the 238-residue chain is Ribonuclease PH (238 aa).

Phosphate contacts are provided by residues Arg-86 and 124–126; that span reads GTR.

It belongs to the RNase PH family. As to quaternary structure, homohexameric ring arranged as a trimer of dimers.

It catalyses the reaction tRNA(n+1) + phosphate = tRNA(n) + a ribonucleoside 5'-diphosphate. Its function is as follows. Phosphorolytic 3'-5' exoribonuclease that plays an important role in tRNA 3'-end maturation. Removes nucleotide residues following the 3'-CCA terminus of tRNAs; can also add nucleotides to the ends of RNA molecules by using nucleoside diphosphates as substrates, but this may not be physiologically important. Probably plays a role in initiation of 16S rRNA degradation (leading to ribosome degradation) during starvation. This chain is Ribonuclease PH, found in Haemophilus influenzae (strain PittEE).